The primary structure comprises 310 residues: S-methyl-5'-thioadenosine phosphorylase (310 aa).

Residues threonine 20, 62–63, and 95–96 contribute to the phosphate site; these read RH and SA. Substrate is bound at residue methionine 197. Position 198 (serine 198) interacts with phosphate. 221-223 contacts substrate; that stretch reads DYD.

This sequence belongs to the PNP/MTAP phosphorylase family. MTAP subfamily. As to quaternary structure, homotrimer.

It localises to the cytoplasm. It is found in the nucleus. It carries out the reaction S-methyl-5'-thioadenosine + phosphate = 5-(methylsulfanyl)-alpha-D-ribose 1-phosphate + adenine. The protein operates within amino-acid biosynthesis; L-methionine biosynthesis via salvage pathway; S-methyl-5-thio-alpha-D-ribose 1-phosphate from S-methyl-5'-thioadenosine (phosphorylase route): step 1/1. Functionally, catalyzes the reversible phosphorylation of S-methyl-5'-thioadenosine (MTA) to adenine and 5-methylthioribose-1-phosphate. Involved in the breakdown of MTA, a major by-product of polyamine biosynthesis. Responsible for the first step in the methionine salvage pathway after MTA has been generated from S-adenosylmethionine. Has broad substrate specificity with 6-aminopurine nucleosides as preferred substrates. This is S-methyl-5'-thioadenosine phosphorylase from Neurospora crassa (strain ATCC 24698 / 74-OR23-1A / CBS 708.71 / DSM 1257 / FGSC 987).